The sequence spans 152 residues: SsrA-binding protein (152 aa).

The protein belongs to the SmpB family.

The protein localises to the cytoplasm. Its function is as follows. Required for rescue of stalled ribosomes mediated by trans-translation. Binds to transfer-messenger RNA (tmRNA), required for stable association of tmRNA with ribosomes. tmRNA and SmpB together mimic tRNA shape, replacing the anticodon stem-loop with SmpB. tmRNA is encoded by the ssrA gene; the 2 termini fold to resemble tRNA(Ala) and it encodes a 'tag peptide', a short internal open reading frame. During trans-translation Ala-aminoacylated tmRNA acts like a tRNA, entering the A-site of stalled ribosomes, displacing the stalled mRNA. The ribosome then switches to translate the ORF on the tmRNA; the nascent peptide is terminated with the 'tag peptide' encoded by the tmRNA and targeted for degradation. The ribosome is freed to recommence translation, which seems to be the essential function of trans-translation. This chain is SsrA-binding protein, found in Rickettsia akari (strain Hartford).